Reading from the N-terminus, the 433-residue chain is Serine hydroxymethyltransferase (433 aa).

(6S)-5,6,7,8-tetrahydrofolate is bound by residues Leu132 and 136–138 (GHL). Lys241 carries the N6-(pyridoxal phosphate)lysine modification.

It belongs to the SHMT family. As to quaternary structure, homodimer. The cofactor is pyridoxal 5'-phosphate.

Its subcellular location is the cytoplasm. It carries out the reaction (6R)-5,10-methylene-5,6,7,8-tetrahydrofolate + glycine + H2O = (6S)-5,6,7,8-tetrahydrofolate + L-serine. The protein operates within one-carbon metabolism; tetrahydrofolate interconversion. It participates in amino-acid biosynthesis; glycine biosynthesis; glycine from L-serine: step 1/1. Functionally, catalyzes the reversible interconversion of serine and glycine with tetrahydrofolate (THF) serving as the one-carbon carrier. This reaction serves as the major source of one-carbon groups required for the biosynthesis of purines, thymidylate, methionine, and other important biomolecules. Also exhibits THF-independent aldolase activity toward beta-hydroxyamino acids, producing glycine and aldehydes, via a retro-aldol mechanism. In Methylobacterium sp. (strain 4-46), this protein is Serine hydroxymethyltransferase.